A 735-amino-acid chain; its full sequence is 1,4-alpha-glucan branching enzyme GlgB (735 aa).

D414 (nucleophile) is an active-site residue. The Proton donor role is filled by E469.

The protein belongs to the glycosyl hydrolase 13 family. GlgB subfamily. In terms of assembly, monomer.

It carries out the reaction Transfers a segment of a (1-&gt;4)-alpha-D-glucan chain to a primary hydroxy group in a similar glucan chain.. It functions in the pathway glycan biosynthesis; glycogen biosynthesis. Its function is as follows. Catalyzes the formation of the alpha-1,6-glucosidic linkages in glycogen by scission of a 1,4-alpha-linked oligosaccharide from growing alpha-1,4-glucan chains and the subsequent attachment of the oligosaccharide to the alpha-1,6 position. This is 1,4-alpha-glucan branching enzyme GlgB from Burkholderia lata (strain ATCC 17760 / DSM 23089 / LMG 22485 / NCIMB 9086 / R18194 / 383).